The sequence spans 420 residues: Gamma-glutamyl phosphate reductase (420 aa).

It belongs to the gamma-glutamyl phosphate reductase family.

It is found in the cytoplasm. The enzyme catalyses L-glutamate 5-semialdehyde + phosphate + NADP(+) = L-glutamyl 5-phosphate + NADPH + H(+). It participates in amino-acid biosynthesis; L-proline biosynthesis; L-glutamate 5-semialdehyde from L-glutamate: step 2/2. Catalyzes the NADPH-dependent reduction of L-glutamate 5-phosphate into L-glutamate 5-semialdehyde and phosphate. The product spontaneously undergoes cyclization to form 1-pyrroline-5-carboxylate. The polypeptide is Gamma-glutamyl phosphate reductase (Streptococcus pneumoniae serotype 4 (strain ATCC BAA-334 / TIGR4)).